Reading from the N-terminus, the 249-residue chain is Vesicle-associated membrane protein-associated protein A (249 aa).

An N-acetylalanine modification is found at alanine 2. Over 2-227 (ASASGTMAKH…VSFRENVTSP (226 aa)) the chain is Cytoplasmic. Residues 14-131 (ILVLDPPTDL…MDSKLRCVFE (118 aa)) enclose the MSP domain. The segment at 50 to 53 (KVKT) is phosphorylated FFAT motif binding. Lysine 125 is modified (N6-acetyllysine). Serine 166 is modified (phosphoserine). Residues 169–205 (DTETRKLVEECKRLQGEMMKLSEENRLLRDEGLRLRK) are a coiled coil. Threonine 170 carries the phosphothreonine modification. 3 positions are modified to phosphoserine: serine 214, serine 216, and serine 219. Residues 228–248 (LPSLLVVIAAIFIGFFLGKFI) form a helical; Anchor for type IV membrane protein membrane-spanning segment.

This sequence belongs to the VAMP-associated protein (VAP) (TC 9.B.17) family. Homodimer; disulfide-linked. Heterodimer with VAPB. Interacts with VAMP1, VAMP2, STX1A, BET1, SEC22C and with the C-terminal domain of OCLN. Interacts (via MSP domain) with OSBPL1A (via FFAT motif). Interacts (via MSP domain) with ZFYVE27; may retain ZFYVE27 in the endoplasmic reticulum and regulate its function in cell projections formation. Interacts with OSBP. Interacts (via C-terminus) with RSAD2/viperin (via C-terminus). Interacts with IFITM3. Interacts with OSBPL3 (phosphorylated form). Interacts with KIF5A in a ZFYVE27-dependent manner. Interacts (via MSP domain) with STARD3 (via phosphorylated FFAT motif); this interaction recruits VAPA to the endosome. Interacts with STARD3NL (via FFAT motif). Interacts with CERT1. Interacts with PLEKHA3 and SACM1L to form a ternary complex. Interacts with VPS13A (via FFAT motif). Interacts with RB1CC1 (via phosphorylated FFAT motif), MIGA2 (via phosphorylated FFAT motif), RMDN3 (via phosphorylated FFAT motif), KCNB1 (via phosphorylated FFAT motif) and KCNB2 (via phosphorylated FFAT motif). Interacts (via MSP domain) with WDR44 (via FFAT-like motif); the interactions connect the endoplasmic reticulum (ER) with the endosomal tubule.

Its subcellular location is the endoplasmic reticulum membrane. The protein localises to the cell junction. The protein resides in the tight junction. It is found in the cell membrane. Its function is as follows. Endoplasmic reticulum (ER)-anchored protein that mediates the formation of contact sites between the ER and endosomes via interaction with FFAT motif-containing proteins such as STARD3 or WDR44. STARD3-VAPA interaction enables cholesterol transfer from the ER to endosomes. Via interaction with WDR44 participates in neosynthesized protein export. In addition, recruited to the plasma membrane through OSBPL3 binding. The OSBPL3-VAPA complex stimulates RRAS signaling which in turn attenuates integrin beta-1 (ITGB1) activation at the cell surface. With OSBPL3, may regulate ER morphology. May play a role in vesicle trafficking. This chain is Vesicle-associated membrane protein-associated protein A, found in Bos taurus (Bovine).